We begin with the raw amino-acid sequence, 305 residues long: MSKKLTFQEIILTLQQFWNDQGCMLMQAYDNEKGAGTMSPYTFLRAIGPEPWNAAYVEPSRRPADGRYGENPNRLYQHHQFQVVMKPSPSNIQELYLESLEKLGINPLEHDIRFVEDNWENPSTGSAGLGWEVWLDGMEITQFTYFQQVGGLATSPVTAEVTYGLERLASYIQEVDSVYDIEWADGVKYGEIFIQPEYEHSKYSFEISDQEMLLENFDKFEKEAGRALEEGLVHPAYDYVLKCSHTFNLLDARGAVSVTERAGYIARIRNLARVVAKTFVAERKRLGYPLLDEETRVKLLAEDAE.

This sequence belongs to the class-II aminoacyl-tRNA synthetase family. In terms of assembly, tetramer of two alpha and two beta subunits.

The protein resides in the cytoplasm. The catalysed reaction is tRNA(Gly) + glycine + ATP = glycyl-tRNA(Gly) + AMP + diphosphate. This is Glycine--tRNA ligase alpha subunit from Streptococcus pneumoniae (strain ATCC 700669 / Spain 23F-1).